Consider the following 264-residue polypeptide: Acyl-[acyl-carrier-protein]--UDP-N-acetylglucosamine O-acyltransferase (264 aa).

This sequence belongs to the transferase hexapeptide repeat family. LpxA subfamily. In terms of assembly, homotrimer.

It is found in the cytoplasm. It carries out the reaction a (3R)-hydroxyacyl-[ACP] + UDP-N-acetyl-alpha-D-glucosamine = a UDP-3-O-[(3R)-3-hydroxyacyl]-N-acetyl-alpha-D-glucosamine + holo-[ACP]. It participates in glycolipid biosynthesis; lipid IV(A) biosynthesis; lipid IV(A) from (3R)-3-hydroxytetradecanoyl-[acyl-carrier-protein] and UDP-N-acetyl-alpha-D-glucosamine: step 1/6. Functionally, involved in the biosynthesis of lipid A, a phosphorylated glycolipid that anchors the lipopolysaccharide to the outer membrane of the cell. The chain is Acyl-[acyl-carrier-protein]--UDP-N-acetylglucosamine O-acyltransferase from Rickettsia peacockii (strain Rustic).